Consider the following 85-residue polypeptide: Small ribosomal subunit protein uS17 (85 aa).

It belongs to the universal ribosomal protein uS17 family. As to quaternary structure, part of the 30S ribosomal subunit.

One of the primary rRNA binding proteins, it binds specifically to the 5'-end of 16S ribosomal RNA. In Lachnospira eligens (strain ATCC 27750 / DSM 3376 / VPI C15-48 / C15-B4) (Eubacterium eligens), this protein is Small ribosomal subunit protein uS17.